Consider the following 331-residue polypeptide: Pyrimidine monooxygenase RutA (331 aa).

FMN-binding positions include 79-80 (IK), Asn-145, Glu-154, 170-171 (RY), and Ser-220. Residues 300–331 (WLTEQSQKDTRSGTDTNVRQMADPTSASAFNH) are disordered. Polar residues predominate over residues 312–331 (GTDTNVRQMADPTSASAFNH).

It belongs to the NtaA/SnaA/DszA monooxygenase family. RutA subfamily.

It catalyses the reaction uracil + FMNH2 + NADH + O2 = (Z)-3-ureidoacrylate + FMN + NAD(+) + H2O + H(+). The catalysed reaction is thymine + FMNH2 + NADH + O2 = (Z)-2-methylureidoacrylate + FMN + NAD(+) + H2O + H(+). In terms of biological role, catalyzes the pyrimidine ring opening between N-3 and C-4 by an unusual flavin hydroperoxide-catalyzed mechanism, adding oxygen atoms in the process to yield ureidoacrylate peracid, that immediately reacts with FMN forming ureidoacrylate and FMN-N(5)-oxide. The FMN-N(5)-oxide reacts spontaneously with NADH to produce FMN. Requires the flavin reductase RutF to regenerate FMN in vivo. The polypeptide is Pyrimidine monooxygenase RutA (Escherichia coli O7:K1 (strain IAI39 / ExPEC)).